The following is a 505-amino-acid chain: Protein disulfide-isomerase A3 (505 aa).

A signal peptide spans 1 to 24 (MRLRRLALFPGVALLLAAARLAAA). The Thioredoxin 1 domain occupies 25-133 (SDVLELTDDN…IVSHLKKQAG (109 aa)). Residues cysteine 57 and cysteine 60 each act as nucleophile in the active site. An intrachain disulfide couples cysteine 57 to cysteine 60. Lysine 61 carries the N6-methyllysine modification. Cysteines 85 and 92 form a disulfide. Lysine 129 carries the post-translational modification N6-succinyllysine. Lysine 152 is modified (N6-acetyllysine). Position 218 is an N6-succinyllysine (lysine 218). N6-acetyllysine is present on lysine 252. Threonine 319 bears the Phosphothreonine mark. The Thioredoxin 2 domain maps to 343 to 485 (SRDGKALERF…FISYLQREAT (143 aa)). Lysine 362 carries the post-translational modification N6-acetyllysine. Catalysis depends on nucleophile residues cysteine 406 and cysteine 409. A disulfide bridge links cysteine 406 with cysteine 409. The segment at 484-505 (ATNPPVIQEEKPKKKKKAQEDL) is disordered. Residues 491 to 505 (QEEKPKKKKKAQEDL) show a composition bias toward basic and acidic residues. Lysine 494 carries the N6-acetyllysine modification. Residues 502-505 (QEDL) carry the Prevents secretion from ER motif.

Part of the major histocompatibility complex class I (MHC I) peptide loading complex composed of TAP1, TAP2, B2M, MHC heavy chain, TAPBP, PDIA3, and CALR. Interacts with ERP27 and CANX. Interacts with SERPINA2 and with the S and Z variants of SERPINA1. Interacts with ATP2A2. Post-translationally, within the major histocompatibility complex class I (MHC I) peptide loading complex forms reversible disulfide-linked heterodimers with TAPBP as part of its protein folding chaperone activity. This is essential to assist the dynamic assembly of the MHC I complex with high affinity antigens in the endoplasmic reticulum. Phosphorylated. As to expression, detected in the flagellum and head region of spermatozoa (at protein level). Expressed in liver, stomach and colon (at protein level). Expressed in gastric parietal cells and chief cells (at protein level).

It is found in the endoplasmic reticulum. The protein resides in the endoplasmic reticulum lumen. The protein localises to the melanosome. The enzyme catalyses Catalyzes the rearrangement of -S-S- bonds in proteins.. Its activity is regulated as follows. Association with calcitriol does not affect its enzymatic activity. In terms of biological role, protein disulfide isomerase that catalyzes the formation, isomerization, and reduction or oxidation of disulfide bonds in client proteins and functions as a protein folding chaperone. Core component of the major histocompatibility complex class I (MHC I) peptide loading complex where it functions as an essential folding chaperone for TAPBP. Through TAPBP, assists the dynamic assembly of the MHC I complex with high affinity antigens in the endoplasmic reticulum. Therefore, plays a crucial role in the presentation of antigens to cytotoxic T cells in adaptive immunity. This Homo sapiens (Human) protein is Protein disulfide-isomerase A3.